Here is a 108-residue protein sequence, read N- to C-terminus: UPF0102 protein Sputcn32_3693 (108 aa).

Belongs to the UPF0102 family.

This chain is UPF0102 protein Sputcn32_3693, found in Shewanella putrefaciens (strain CN-32 / ATCC BAA-453).